Consider the following 254-residue polypeptide: Ubiquinone/menaquinone biosynthesis C-methyltransferase UbiE (254 aa).

S-adenosyl-L-methionine contacts are provided by residues threonine 77, aspartate 98, 126-127 (DA), and serine 143.

The protein belongs to the class I-like SAM-binding methyltransferase superfamily. MenG/UbiE family.

The enzyme catalyses a 2-demethylmenaquinol + S-adenosyl-L-methionine = a menaquinol + S-adenosyl-L-homocysteine + H(+). It catalyses the reaction a 2-methoxy-6-(all-trans-polyprenyl)benzene-1,4-diol + S-adenosyl-L-methionine = a 5-methoxy-2-methyl-3-(all-trans-polyprenyl)benzene-1,4-diol + S-adenosyl-L-homocysteine + H(+). It functions in the pathway quinol/quinone metabolism; menaquinone biosynthesis; menaquinol from 1,4-dihydroxy-2-naphthoate: step 2/2. Its pathway is cofactor biosynthesis; ubiquinone biosynthesis. In terms of biological role, methyltransferase required for the conversion of demethylmenaquinol (DMKH2) to menaquinol (MKH2) and the conversion of 2-polyprenyl-6-methoxy-1,4-benzoquinol (DDMQH2) to 2-polyprenyl-3-methyl-6-methoxy-1,4-benzoquinol (DMQH2). The chain is Ubiquinone/menaquinone biosynthesis C-methyltransferase UbiE from Blochmanniella pennsylvanica (strain BPEN).